We begin with the raw amino-acid sequence, 189 residues long: GMP synthase [glutamine-hydrolyzing] subunit A (189 aa).

The 189-residue stretch at 1–189 (MIVILNNGGQ…CKVCGFKFNE (189 aa)) folds into the Glutamine amidotransferase type-1 domain. The active-site Nucleophile is Cys76. Residues His163 and Glu165 contribute to the active site.

In terms of assembly, heterodimer composed of a glutamine amidotransferase subunit (A) and a GMP-binding subunit (B).

The enzyme catalyses XMP + L-glutamine + ATP + H2O = GMP + L-glutamate + AMP + diphosphate + 2 H(+). It participates in purine metabolism; GMP biosynthesis; GMP from XMP (L-Gln route): step 1/1. Catalyzes the synthesis of GMP from XMP. This chain is GMP synthase [glutamine-hydrolyzing] subunit A, found in Methanococcus vannielii (strain ATCC 35089 / DSM 1224 / JCM 13029 / OCM 148 / SB).